The following is a 717-amino-acid chain: F-box only protein 42 (717 aa).

Over residues 1–30 the composition is skewed to acidic residues; it reads MASSSDSEDDSVMAVDQEETALEGTMEQDE. A disordered region spans residues 1–34; it reads MASSSDSEDDSVMAVDQEETALEGTMEQDEDPHP. An F-box domain is found at 44 to 93; the sequence is NRSMSELPEEVLEYILSFLSPYQEHKTAALVCKQWYRLIKGVAHQCYHGF. Kelch repeat units follow at residues 132–184, 186–242, 244–293, and 295–342; these read SMYV…VYKD, LVLF…VIGD, MIVF…VIDD, and TLLI…LWCH. The tract at residues 361–452 is disordered; the sequence is RAPLSPSLNS…NLSPGTVAVG (92 aa). Over residues 363-376 the composition is skewed to low complexity; that stretch reads PLSPSLNSRPSPIS. 2 positions are modified to phosphoserine: Ser-365 and Ser-373. Thr-378 bears the Phosphothreonine mark. The span at 416–426 shows a compositional bias: polar residues; sequence QRQTPSGSREG. Position 552 is a phosphoserine (Ser-552). Over residues 570-595 the composition is skewed to low complexity; sequence GPSASAALSPPLGSSPSSPGSQSLSS. The interval 570-632 is disordered; that stretch reads GPSASAALSP…HHPPQSLNVG (63 aa).

In terms of assembly, component of some SCF complex, composed of CUL1, SKP1, RBX1 and FBXO42. Interacts (via the kelch domain) with p53/TP53; interaction is direct.

Substrate-recognition component of some SCF (SKP1-CUL1-F-box protein)-type E3 ubiquitin ligase complex. Specifically recognizes p53/TP53, promoting its ubiquitination and degradation. The sequence is that of F-box only protein 42 (Fbxo42) from Mus musculus (Mouse).